The chain runs to 514 residues: Histidine ammonia-lyase (514 aa).

The 5-imidazolinone (Ala-Gly) cross-link spans 144-146 (ASG). At Ser145 the chain carries 2,3-didehydroalanine (Ser).

The protein belongs to the PAL/histidase family. Post-translationally, contains an active site 4-methylidene-imidazol-5-one (MIO), which is formed autocatalytically by cyclization and dehydration of residues Ala-Ser-Gly.

It localises to the cytoplasm. The catalysed reaction is L-histidine = trans-urocanate + NH4(+). Its pathway is amino-acid degradation; L-histidine degradation into L-glutamate; N-formimidoyl-L-glutamate from L-histidine: step 1/3. The polypeptide is Histidine ammonia-lyase (Rhodospirillum rubrum (strain ATCC 11170 / ATH 1.1.1 / DSM 467 / LMG 4362 / NCIMB 8255 / S1)).